The primary structure comprises 537 residues: CTP synthase (537 aa).

The amidoligase domain stretch occupies residues 1–265 (MVHFIFVTGG…DNKVLKFFNI (265 aa)). Ser-13 contributes to the CTP binding site. Ser-13 lines the UTP pocket. ATP contacts are provided by residues 14-19 (SLGKGL) and Asp-71. Residues Asp-71 and Glu-139 each contribute to the Mg(2+) site. Residues 146–148 (DIE) and Lys-222 each bind CTP. Position 222 (Lys-222) interacts with UTP. Residues 290 to 536 (RIAIIAKYHK…IKAAIEYNKC (247 aa)) form the Glutamine amidotransferase type-1 domain. Gly-352 lines the L-glutamine pocket. Cys-379 serves as the catalytic Nucleophile; for glutamine hydrolysis. L-glutamine contacts are provided by residues 380–383 (FGMQ), Glu-403, and Arg-464. Catalysis depends on residues His-509 and Glu-511.

Belongs to the CTP synthase family. Homotetramer.

It carries out the reaction UTP + L-glutamine + ATP + H2O = CTP + L-glutamate + ADP + phosphate + 2 H(+). The catalysed reaction is L-glutamine + H2O = L-glutamate + NH4(+). The enzyme catalyses UTP + NH4(+) + ATP = CTP + ADP + phosphate + 2 H(+). The protein operates within pyrimidine metabolism; CTP biosynthesis via de novo pathway; CTP from UDP: step 2/2. Its activity is regulated as follows. Allosterically activated by GTP, when glutamine is the substrate; GTP has no effect on the reaction when ammonia is the substrate. The allosteric effector GTP functions by stabilizing the protein conformation that binds the tetrahedral intermediate(s) formed during glutamine hydrolysis. Inhibited by the product CTP, via allosteric rather than competitive inhibition. Its function is as follows. Catalyzes the ATP-dependent amination of UTP to CTP with either L-glutamine or ammonia as the source of nitrogen. Regulates intracellular CTP levels through interactions with the four ribonucleotide triphosphates. The polypeptide is CTP synthase (Rickettsia rickettsii (strain Iowa)).